The primary structure comprises 125 residues: Small ribosomal subunit protein uS12m (125 aa).

A disordered region spans residues 1-24; the sequence is MPTSNQSIRHGREKKRRTDRTRAL. Positions 9–19 are enriched in basic residues; it reads RHGREKKRRTD.

It belongs to the universal ribosomal protein uS12 family.

It localises to the mitochondrion. Its function is as follows. Protein S12 is involved in the translation initiation step. This Pinus sylvestris (Scotch pine) protein is Small ribosomal subunit protein uS12m (RPS12).